The following is a 244-amino-acid chain: Electron transfer flavoprotein beta subunit lysine methyltransferase homolog (244 aa).

This sequence belongs to the methyltransferase superfamily. ETFBKMT family.

Probable methyltransferase. This Caenorhabditis elegans protein is Electron transfer flavoprotein beta subunit lysine methyltransferase homolog.